Here is a 441-residue protein sequence, read N- to C-terminus: UDP-N-acetylmuramoylalanine--D-glutamate ligase (441 aa).

112–118 contacts ATP; the sequence is GTNGKTT.

The protein belongs to the MurCDEF family.

The protein localises to the cytoplasm. The catalysed reaction is UDP-N-acetyl-alpha-D-muramoyl-L-alanine + D-glutamate + ATP = UDP-N-acetyl-alpha-D-muramoyl-L-alanyl-D-glutamate + ADP + phosphate + H(+). Its pathway is cell wall biogenesis; peptidoglycan biosynthesis. Its function is as follows. Cell wall formation. Catalyzes the addition of glutamate to the nucleotide precursor UDP-N-acetylmuramoyl-L-alanine (UMA). This chain is UDP-N-acetylmuramoylalanine--D-glutamate ligase, found in Gloeobacter violaceus (strain ATCC 29082 / PCC 7421).